The following is a 249-amino-acid chain: ATP synthase subunit a, chloroplastic (249 aa).

The next 5 helical transmembrane spans lie at 40 to 60 (QVLITSWVVIAILLGSAVLAV), 97 to 117 (VPFIGTLFLFIFVSNWSGALL), 136 to 156 (INTTVALALLTSAAYFYAGLS), 201 to 221 (LVVVVLVSLVPLVVPIPVMFL), and 222 to 242 (GLFTSGIQALIFATLAAAYIG).

Belongs to the ATPase A chain family. F-type ATPases have 2 components, CF(1) - the catalytic core - and CF(0) - the membrane proton channel. CF(1) has five subunits: alpha(3), beta(3), gamma(1), delta(1), epsilon(1). CF(0) has four main subunits: a, b, b' and c.

It localises to the plastid. It is found in the chloroplast thylakoid membrane. Key component of the proton channel; it plays a direct role in the translocation of protons across the membrane. This is ATP synthase subunit a, chloroplastic from Arabis hirsuta (Hairy rock-cress).